The primary structure comprises 500 residues: Protein-tyrosine sulfotransferase (500 aa).

The first 24 residues, 1-24, serve as a signal peptide directing secretion; it reads MQMNSVWKLSLGLLLLSSVIGSFA. The Lumenal portion of the chain corresponds to 25 to 467; sequence ELDFGHCETL…SVLGEMGEEK (443 aa). Residues Arg121 and Glu142 contribute to the active site. Asn156, Asn248, Asn315, Asn343, Asn359, and Asn395 each carry an N-linked (GlcNAc...) asparagine glycan. Residues 468-488 traverse the membrane as a helical segment; it reads LWKFVPVALMLLLIVLFFLFV. Topologically, residues 489–500 are cytoplasmic; that stretch reads NAKRRRTSKVKI.

Expressed throughout the plant body, highest levels of expression are in the root apical meristem.

Its subcellular location is the golgi apparatus membrane. It carries out the reaction L-tyrosyl-[protein] + 3'-phosphoadenylyl sulfate = O-sulfo-L-tyrosine-[protein] + adenosine 3',5'-bisphosphate + H(+). Functionally, catalyzes the O-sulfation of tyrosine residues within acidic motifs of polypeptides. In Arabidopsis thaliana (Mouse-ear cress), this protein is Protein-tyrosine sulfotransferase (TPST).